The chain runs to 122 residues: Ribosome-binding factor A (122 aa).

The protein belongs to the RbfA family. As to quaternary structure, monomer. Binds 30S ribosomal subunits, but not 50S ribosomal subunits or 70S ribosomes.

The protein resides in the cytoplasm. Its function is as follows. One of several proteins that assist in the late maturation steps of the functional core of the 30S ribosomal subunit. Associates with free 30S ribosomal subunits (but not with 30S subunits that are part of 70S ribosomes or polysomes). Required for efficient processing of 16S rRNA. May interact with the 5'-terminal helix region of 16S rRNA. This chain is Ribosome-binding factor A, found in Streptococcus agalactiae serotype III (strain NEM316).